The following is a 498-amino-acid chain: N-acyl-D-aspartate deacylase (498 aa).

Residues 478 to 498 are disordered; the sequence is AERPGQVLAPGDAIPWSQQSE.

Belongs to the metallo-dependent hydrolases superfamily. N-acyl-D-amino-acid deacylase family. It depends on Zn(2+) as a cofactor.

The protein resides in the cytoplasm. The enzyme catalyses an N-acyl-D-aspartate + H2O = D-aspartate + a carboxylate. This is N-acyl-D-aspartate deacylase from Alcaligenes xylosoxydans xylosoxydans (Achromobacter xylosoxidans).